A 283-amino-acid chain; its full sequence is Bifunctional protein FolD (283 aa).

Residues 165-167 (GRG), Thr192, and Val233 each bind NADP(+).

Belongs to the tetrahydrofolate dehydrogenase/cyclohydrolase family. Homodimer.

It catalyses the reaction (6R)-5,10-methylene-5,6,7,8-tetrahydrofolate + NADP(+) = (6R)-5,10-methenyltetrahydrofolate + NADPH. It carries out the reaction (6R)-5,10-methenyltetrahydrofolate + H2O = (6R)-10-formyltetrahydrofolate + H(+). It functions in the pathway one-carbon metabolism; tetrahydrofolate interconversion. In terms of biological role, catalyzes the oxidation of 5,10-methylenetetrahydrofolate to 5,10-methenyltetrahydrofolate and then the hydrolysis of 5,10-methenyltetrahydrofolate to 10-formyltetrahydrofolate. The polypeptide is Bifunctional protein FolD (Thermobifida fusca (strain YX)).